We begin with the raw amino-acid sequence, 256 residues long: Fructose-1,6-bisphosphatase/inositol-1-monophosphatase (256 aa).

Residues E67, D83, L85, and D86 each contribute to the Mg(2+) site. Substrate is bound by residues 86–88, R170, I175, and R194; that span reads DGS. D201 contributes to the Mg(2+) binding site.

Belongs to the inositol monophosphatase superfamily. FBPase class 4 family. As to quaternary structure, homodimer. Mg(2+) is required as a cofactor.

The catalysed reaction is beta-D-fructose 1,6-bisphosphate + H2O = beta-D-fructose 6-phosphate + phosphate. It carries out the reaction a myo-inositol phosphate + H2O = myo-inositol + phosphate. Functionally, phosphatase with broad specificity; it can dephosphorylate fructose 1,6-bisphosphate (FBP) and inositol-1-phosphate (IMP). However, while possessing a high FBPase activity in vitro, does not participate in gluconeogenesis in vivo. The polypeptide is Fructose-1,6-bisphosphatase/inositol-1-monophosphatase (suhB) (Thermococcus kodakarensis (strain ATCC BAA-918 / JCM 12380 / KOD1) (Pyrococcus kodakaraensis (strain KOD1))).